The chain runs to 418 residues: Adenylosuccinate synthetase (418 aa).

GTP is bound by residues 12–18 and 40–42; these read GDEGKGK and GHT. Residue D13 is the Proton acceptor of the active site. Mg(2+)-binding residues include D13 and G40. Residues 13-16, 38-41, T128, R142, Q221, T236, and R299 each bind IMP; these read DEGK and NAGH. The Proton donor role is filled by H41. Residue 295-301 coordinates substrate; the sequence is ATTGRNR. Residues R301, 327 to 329, and 399 to 401 contribute to the GTP site; these read KAD and SYG.

Belongs to the adenylosuccinate synthetase family. As to quaternary structure, homodimer. The cofactor is Mg(2+).

The protein resides in the cytoplasm. It catalyses the reaction IMP + L-aspartate + GTP = N(6)-(1,2-dicarboxyethyl)-AMP + GDP + phosphate + 2 H(+). It functions in the pathway purine metabolism; AMP biosynthesis via de novo pathway; AMP from IMP: step 1/2. In terms of biological role, plays an important role in the de novo pathway of purine nucleotide biosynthesis. Catalyzes the first committed step in the biosynthesis of AMP from IMP. This chain is Adenylosuccinate synthetase, found in Finegoldia magna (strain ATCC 29328 / DSM 20472 / WAL 2508) (Peptostreptococcus magnus).